A 102-amino-acid polypeptide reads, in one-letter code: Transposable element activator uncharacterized 12 kDa protein (102 aa).

The segment covering 24–51 (HNHNQNHNHSHNLNPKKKHHRRGQRSAH) has biased composition (basic residues). The interval 24–55 (HNHNQNHNHSHNLNPKKKHHRRGQRSAHRMYG) is disordered.

This chain is Transposable element activator uncharacterized 12 kDa protein, found in Zea mays (Maize).